Reading from the N-terminus, the 275-residue chain is Phosphate import ATP-binding protein PstB 1 (275 aa).

The region spanning 22–261 (FNVEGVKVYY…SPTEQMFNSP (240 aa)) is the ABC transporter domain. ATP is bound at residue 54–61 (GPSGCGKS).

Belongs to the ABC transporter superfamily. Phosphate importer (TC 3.A.1.7) family. The complex is composed of two ATP-binding proteins (PstB), two transmembrane proteins (PstC and PstA) and a solute-binding protein (PstS).

It localises to the cell inner membrane. It carries out the reaction phosphate(out) + ATP + H2O = ADP + 2 phosphate(in) + H(+). Its function is as follows. Part of the ABC transporter complex PstSACB involved in phosphate import. Responsible for energy coupling to the transport system. The sequence is that of Phosphate import ATP-binding protein PstB 1 from Trichormus variabilis (strain ATCC 29413 / PCC 7937) (Anabaena variabilis).